The chain runs to 381 residues: Endolytic peptidoglycan transglycosylase RlpA (381 aa).

Residues M1–A19 form the signal peptide. The N-palmitoyl cysteine moiety is linked to residue C20. C20 is lipidated: S-diacylglycerol cysteine. The tract at residues L196 to A274 is disordered. Residues S208 to G218 show a composition bias toward low complexity. An SPOR domain is found at A304–A380.

Belongs to the RlpA family.

The protein resides in the cell membrane. Functionally, lytic transglycosylase with a strong preference for naked glycan strands that lack stem peptides. The sequence is that of Endolytic peptidoglycan transglycosylase RlpA from Salmonella typhimurium (strain LT2 / SGSC1412 / ATCC 700720).